Reading from the N-terminus, the 596-residue chain is MLNLCHALRGVRQFSCSVIVKVKCASCSIKLQDQDPSKPGYYTKPKSLPDSKLNPDLQDLKYLLFSQDIQLSKQAIQNDPDLKTKRDLLLRVICKRCSNALHHNNYNPEEFPESTLNDILNYVPRGSNVMHIVPFVEFPLHLDPNVLKRNDLETTLVLTKSDQVFKDKNAVSKKVPIFMKQFLKNTLRIDSNKTFAISALKNWNISMFYNYFKNYTYLLGNPNVGKSTLINTLLQKYLGYKVKIDSTGKINSPSEEVMQEAFTNPKNFFKIQAAGVSHIPNLTRSVQAYQVGGKILFDLPGYSTSTSRLRLEEPIDERWLQRLRKTDLFNRKHIKQKTYESMKGTSQGGCYTVGGIFYLVPPKGSINQIVKYIPGPSKTFKNIEKGIDVFNSCNSSSGTHPLSRYCGIKSVICEKSQYKRYAIPPFIGSIEIVLKDIGYILLRTTGRYEFKGLHEIWIPRGIQVGIREPLENLIESGYQRYIETNGKESSCPRDRPIISSLYEMAPDEADTLNAVKKSYLEKTEKDLSARRFVDDDPYDLVQHLRKKKESLLVLPMVRLAVHLVAPISSNAHVNMNVSKLKRKLGTKYIQKRIYRK.

A mitochondrion-targeting transit peptide spans 1 to 21; it reads MLNLCHALRGVRQFSCSVIVK. Residues 113–305 form the CP-type G domain; sequence ESTLNDILNY…LFDLPGYSTS (193 aa).

Belongs to the TRAFAC class YlqF/YawG GTPase family. GEP3 subfamily.

It is found in the mitochondrion. Interacts genetically with prohibitins and thus may be involved in the mitochondrial lipid metabolism. This chain is Genetic interactor of prohibitins 3, mitochondrial (GEP3), found in Saccharomyces cerevisiae (strain AWRI796) (Baker's yeast).